Reading from the N-terminus, the 99-residue chain is Protein Tat (99 aa).

Residues 1-22 are disordered; sequence MDPVDPNLEPWNHPGSQPRTPC. Positions 1–24 are interaction with human CREBBP; that stretch reads MDPVDPNLEPWNHPGSQPRTPCNK. The tract at residues 1-48 is transactivation; it reads MDPVDPNLEPWNHPGSQPRTPCNKCHCKKCCYHCPVCFLNKGLGISYG. Positions 22, 25, and 27 each coordinate Zn(2+). A cysteine-rich region spans residues 22-37; sequence CNKCHCKKCCYHCPVC. Lys-28 is modified (N6-acetyllysine; by host PCAF). 4 residues coordinate Zn(2+): Cys-30, His-33, Cys-34, and Cys-37. The interval 38–48 is core; sequence FLNKGLGISYG. Residues 48–99 form a disordered region; that stretch reads GRKKRRQRRGPPQGGQAHQVPIPKQPSSQPRGDPTGPKEQKKKVESEAETDP. The short motif at 49–57 is the Nuclear localization signal, RNA-binding (TAR), and protein transduction element; it reads RKKRRQRRG. Positions 49–86 are interaction with the host capping enzyme RNGTT; the sequence is RKKRRQRRGPPQGGQAHQVPIPKQPSSQPRGDPTGPKE. 2 positions are modified to N6-acetyllysine; by host EP300 and GCN5L2: Lys-50 and Lys-51. 2 positions are modified to asymmetric dimethylarginine; by host PRMT6: Arg-52 and Arg-53. Lys-71 participates in a covalent cross-link: Glycyl lysine isopeptide (Lys-Gly) (interchain with G-Cter in ubiquitin). The short motif at 78 to 80 is the Cell attachment site element; it reads RGD. Basic and acidic residues predominate over residues 83 to 93; the sequence is GPKEQKKKVES.

The protein belongs to the lentiviruses Tat family. As to quaternary structure, interacts with host CCNT1. Associates with the P-TEFb complex composed at least of Tat, P-TEFb (CDK9 and CCNT1), TAR RNA, RNA Pol II. Recruits the HATs CREBBP, TAF1/TFIID, EP300, PCAF and GCN5L2. Interacts with host KAT5/Tip60; this interaction targets the latter to degradation. Interacts with the host deacetylase SIRT1. Interacts with host capping enzyme RNGTT; this interaction stimulates RNGTT. Binds to host KDR, and to the host integrins ITGAV/ITGB3 and ITGA5/ITGB1. Interacts with host KPNB1/importin beta-1 without previous binding to KPNA1/importin alpha-1. Interacts with EIF2AK2. Interacts with host nucleosome assembly protein NAP1L1; this interaction may be required for the transport of Tat within the nucleus, since the two proteins interact at the nuclear rim. Interacts with host C1QBP/SF2P32; this interaction involves lysine-acetylated Tat. Interacts with the host chemokine receptors CCR2, CCR3 and CXCR4. Interacts with host DPP4/CD26; this interaction may trigger an anti-proliferative effect. Interacts with host LDLR. Interacts with the host extracellular matrix metalloproteinase MMP1. Interacts with host PRMT6; this interaction mediates Tat's methylation. Interacts with, and is ubiquitinated by MDM2/Hdm2. Interacts with host PSMC3 and HTATIP2. Interacts with STAB1; this interaction may overcome SATB1-mediated repression of IL2 and IL2RA (interleukin) in T cells by binding to the same domain than HDAC1. Interacts (when acetylated) with human CDK13, thereby increasing HIV-1 mRNA splicing and promoting the production of the doubly spliced HIV-1 protein Nef. Interacts with host TBP; this interaction modulates the activity of transcriptional pre-initiation complex. Interacts with host RELA. Interacts with host PLSCR1; this interaction negatively regulates Tat transactivation activity by altering its subcellular distribution. Asymmetrical arginine methylation by host PRMT6 seems to diminish the transactivation capacity of Tat and affects the interaction with host CCNT1. In terms of processing, acetylation by EP300, CREBBP, GCN5L2/GCN5 and PCAF regulates the transactivation activity of Tat. EP300-mediated acetylation of Lys-50 promotes dissociation of Tat from the TAR RNA through the competitive binding to PCAF's bromodomain. In addition, the non-acetylated Tat's N-terminus can also interact with PCAF. PCAF-mediated acetylation of Lys-28 enhances Tat's binding to CCNT1. Lys-50 is deacetylated by SIRT1. Post-translationally, polyubiquitination by host MDM2 does not target Tat to degradation, but activates its transactivation function and fosters interaction with CCNT1 and TAR RNA. Phosphorylated by EIF2AK2 on serine and threonine residues adjacent to the basic region important for TAR RNA binding and function. Phosphorylation of Tat by EIF2AK2 is dependent on the prior activation of EIF2AK2 by dsRNA.

The protein resides in the host nucleus. It is found in the host nucleolus. The protein localises to the host cytoplasm. Its subcellular location is the secreted. Functionally, transcriptional activator that increases RNA Pol II processivity, thereby increasing the level of full-length viral transcripts. Recognizes a hairpin structure at the 5'-LTR of the nascent viral mRNAs referred to as the transactivation responsive RNA element (TAR) and recruits the cyclin T1-CDK9 complex (P-TEFb complex) that will in turn hyperphosphorylate the RNA polymerase II to allow efficient elongation. The CDK9 component of P-TEFb and other Tat-activated kinases hyperphosphorylate the C-terminus of RNA Pol II that becomes stabilized and much more processive. Other factors such as HTATSF1/Tat-SF1, SUPT5H/SPT5, and HTATIP2 are also important for Tat's function. Besides its effect on RNA Pol II processivity, Tat induces chromatin remodeling of proviral genes by recruiting the histone acetyltransferases (HATs) CREBBP, EP300 and PCAF to the chromatin. This also contributes to the increase in proviral transcription rate, especially when the provirus integrates in transcriptionally silent region of the host genome. To ensure maximal activation of the LTR, Tat mediates nuclear translocation of NF-kappa-B by interacting with host RELA. Through its interaction with host TBP, Tat may also modulate transcription initiation. Tat can reactivate a latently infected cell by penetrating in it and transactivating its LTR promoter. In the cytoplasm, Tat is thought to act as a translational activator of HIV-1 mRNAs. Extracellular circulating Tat can be endocytosed by surrounding uninfected cells via the binding to several surface receptors such as CD26, CXCR4, heparan sulfate proteoglycans (HSPG) or LDLR. Neurons are rarely infected, but they internalize Tat via their LDLR. Through its interaction with nuclear HATs, Tat is potentially able to control the acetylation-dependent cellular gene expression. Modulates the expression of many cellular genes involved in cell survival, proliferation or in coding for cytokines or cytokine receptors. Tat plays a role in T-cell and neurons apoptosis. Tat induced neurotoxicity and apoptosis probably contribute to neuroAIDS. Circulating Tat also acts as a chemokine-like and/or growth factor-like molecule that binds to specific receptors on the surface of the cells, affecting many cellular pathways. In the vascular system, Tat binds to ITGAV/ITGB3 and ITGA5/ITGB1 integrins dimers at the surface of endothelial cells and competes with bFGF for heparin-binding sites, leading to an excess of soluble bFGF. The protein is Protein Tat of Homo sapiens (Human).